A 489-amino-acid chain; its full sequence is Probable cytosol aminopeptidase (489 aa).

Residues Lys-260 and Asp-265 each coordinate Mn(2+). Residue Lys-272 is part of the active site. Residues Asp-283, Asp-342, and Glu-344 each contribute to the Mn(2+) site. Arg-346 is an active-site residue.

This sequence belongs to the peptidase M17 family. Mn(2+) serves as cofactor.

It localises to the cytoplasm. The enzyme catalyses Release of an N-terminal amino acid, Xaa-|-Yaa-, in which Xaa is preferably Leu, but may be other amino acids including Pro although not Arg or Lys, and Yaa may be Pro. Amino acid amides and methyl esters are also readily hydrolyzed, but rates on arylamides are exceedingly low.. It carries out the reaction Release of an N-terminal amino acid, preferentially leucine, but not glutamic or aspartic acids.. In terms of biological role, presumably involved in the processing and regular turnover of intracellular proteins. Catalyzes the removal of unsubstituted N-terminal amino acids from various peptides. This is Probable cytosol aminopeptidase from Alcanivorax borkumensis (strain ATCC 700651 / DSM 11573 / NCIMB 13689 / SK2).